Reading from the N-terminus, the 151-residue chain is Nucleoside diphosphate kinase (151 aa).

The ATP site is built by Lys11, Phe59, Arg87, Thr93, Arg104, and Asn114. His117 acts as the Pros-phosphohistidine intermediate in catalysis.

This sequence belongs to the NDK family. In terms of assembly, homotetramer. The cofactor is Mg(2+).

It localises to the cytoplasm. It carries out the reaction a 2'-deoxyribonucleoside 5'-diphosphate + ATP = a 2'-deoxyribonucleoside 5'-triphosphate + ADP. It catalyses the reaction a ribonucleoside 5'-diphosphate + ATP = a ribonucleoside 5'-triphosphate + ADP. Functionally, major role in the synthesis of nucleoside triphosphates other than ATP. The ATP gamma phosphate is transferred to the NDP beta phosphate via a ping-pong mechanism, using a phosphorylated active-site intermediate. This is Nucleoside diphosphate kinase from Prochlorococcus marinus (strain NATL2A).